The primary structure comprises 692 residues: Elongation factor G (692 aa).

Residues 8–283 form the tr-type G domain; sequence KNTRNIGIMA…AVVDYLPSPV (276 aa). GTP-binding positions include 17-24, 81-85, and 135-138; these read AHIDAGKT, DTPGH, and NKMD.

The protein belongs to the TRAFAC class translation factor GTPase superfamily. Classic translation factor GTPase family. EF-G/EF-2 subfamily.

It is found in the cytoplasm. Catalyzes the GTP-dependent ribosomal translocation step during translation elongation. During this step, the ribosome changes from the pre-translocational (PRE) to the post-translocational (POST) state as the newly formed A-site-bound peptidyl-tRNA and P-site-bound deacylated tRNA move to the P and E sites, respectively. Catalyzes the coordinated movement of the two tRNA molecules, the mRNA and conformational changes in the ribosome. The sequence is that of Elongation factor G from Exiguobacterium sp. (strain ATCC BAA-1283 / AT1b).